Reading from the N-terminus, the 528-residue chain is Lanosterol 14-alpha demethylase (528 aa).

Position 470 (cysteine 470) interacts with heme.

It belongs to the cytochrome P450 family. The cofactor is heme.

The protein resides in the membrane. It carries out the reaction a 14alpha-methyl steroid + 3 reduced [NADPH--hemoprotein reductase] + 3 O2 = a Delta(14) steroid + formate + 3 oxidized [NADPH--hemoprotein reductase] + 4 H2O + 4 H(+). The catalysed reaction is a 14alpha-methyl steroid + reduced [NADPH--hemoprotein reductase] + O2 = a 14alpha-hydroxymethyl steroid + oxidized [NADPH--hemoprotein reductase] + H2O + H(+). The enzyme catalyses a 14alpha-hydroxymethyl steroid + reduced [NADPH--hemoprotein reductase] + O2 = a 14alpha-formyl steroid + oxidized [NADPH--hemoprotein reductase] + 2 H2O + H(+). It catalyses the reaction a 14alpha-formyl steroid + reduced [NADPH--hemoprotein reductase] + O2 = a Delta(14) steroid + formate + oxidized [NADPH--hemoprotein reductase] + H2O + 2 H(+). It carries out the reaction lanosterol + 3 reduced [NADPH--hemoprotein reductase] + 3 O2 = 4,4-dimethyl-5alpha-cholesta-8,14,24-trien-3beta-ol + formate + 3 oxidized [NADPH--hemoprotein reductase] + 4 H2O + 4 H(+). The catalysed reaction is lanosterol + reduced [NADPH--hemoprotein reductase] + O2 = 32-hydroxylanosterol + oxidized [NADPH--hemoprotein reductase] + H2O + H(+). The enzyme catalyses 32-hydroxylanosterol + reduced [NADPH--hemoprotein reductase] + O2 = 32-oxolanosterol + oxidized [NADPH--hemoprotein reductase] + 2 H2O + H(+). It catalyses the reaction 32-oxolanosterol + reduced [NADPH--hemoprotein reductase] + O2 = 4,4-dimethyl-5alpha-cholesta-8,14,24-trien-3beta-ol + formate + oxidized [NADPH--hemoprotein reductase] + H2O + 2 H(+). It carries out the reaction eburicol + 3 reduced [NADPH--hemoprotein reductase] + 3 O2 = 14-demethyleburicol + formate + 3 oxidized [NADPH--hemoprotein reductase] + 4 H2O + 4 H(+). The catalysed reaction is eburicol + reduced [NADPH--hemoprotein reductase] + O2 = 32-hydroxyeburicol + oxidized [NADPH--hemoprotein reductase] + H2O + H(+). The enzyme catalyses 32-hydroxyeburicol + reduced [NADPH--hemoprotein reductase] + O2 = 32-oxoeburicol + oxidized [NADPH--hemoprotein reductase] + 2 H2O + H(+). It catalyses the reaction 32-oxoeburicol + reduced [NADPH--hemoprotein reductase] + O2 = 14-demethyleburicol + formate + oxidized [NADPH--hemoprotein reductase] + H2O + 2 H(+). The protein operates within steroid biosynthesis; zymosterol biosynthesis; zymosterol from lanosterol: step 1/6. Functionally, sterol 14alpha-demethylase that plays a critical role in the third module of ergosterol biosynthesis pathway, being ergosterol the major sterol component in fungal membranes that participates in a variety of functions. The third module or late pathway involves the ergosterol synthesis itself through consecutive reactions that mainly occur in the endoplasmic reticulum (ER) membrane. In filamentous fungi, during the initial step of this module, lanosterol (lanosta-8,24-dien-3beta-ol) can be metabolized to eburicol. Sterol 14alpha-demethylase catalyzes the three-step oxidative removal of the 14alpha-methyl group (C-32) of both these sterols in the form of formate, and converts eburicol and lanosterol to 14-demethyleburicol (4,4,24-trimethylergosta-8,14,24(28)-trienol) and 4,4-dimethyl-5alpha-cholesta-8,14,24-trien-3beta-ol, respectively, which are further metabolized by other enzymes in the pathway to ergosterol. Can also use substrates not intrinsic to fungi, such as 24,25-dihydrolanosterol (DHL), producing 4,4-dimethyl-8,14-cholestadien-3-beta-ol, but at lower rates than the endogenous substrates. This Candida tropicalis (Yeast) protein is Lanosterol 14-alpha demethylase (ERG11).